The sequence spans 763 residues: Amine oxidase [copper-containing] 3 (763 aa).

At 2 to 6 (TQKTT) the chain is on the cytoplasmic side. Residues 7 to 27 (LVLLALAVITIFALVCVLLAG) traverse the membrane as a helical; Signal-anchor for type II membrane protein segment. The Extracellular portion of the chain corresponds to 28 to 763 (RSGDGGRLSQ…AFSHGGFTYK (736 aa)). An N-linked (GlcNAc...) asparagine glycan is attached at N137. C198 and C199 are oxidised to a cystine. 2 N-linked (GlcNAc...) asparagine glycosylation sites follow: N232 and N294. The active-site Proton acceptor is the D386. A disulfide bond links C404 and C430. The active-site Schiff-base intermediate with substrate; via topaquinone is the Y471. Residue Y471 is modified to 2',4',5'-topaquinone. H520 and H522 together coordinate Cu(2+). Residues D529, L530, D531, and E572 each contribute to the Ca(2+) site. 2 N-linked (GlcNAc...) asparagine glycosylation sites follow: N581 and N592. Residues E641 and F663 each contribute to the Ca(2+) site. An N-linked (GlcNAc...) asparagine glycan is attached at N666. 3 residues coordinate Ca(2+): E667, D673, and L674. H684 lines the Cu(2+) pocket. A disulfide bond links C734 and C741.

Belongs to the copper/topaquinone oxidase family. In terms of assembly, homodimer; disulfide-linked. Probably forms heterodimers with AOC2. Requires Cu(2+) as cofactor. It depends on Ca(2+) as a cofactor. L-topaquinone is required as a cofactor. Topaquinone (TPQ) is generated by copper-dependent autoxidation of a specific tyrosyl residue. In terms of processing, N- and O-glycosylated. As to expression, highly expressed in adipocytes, aorta and lung. Expressed at lower levels in heart, kidney, large intestine, liver, small intestine and stomach.

Its subcellular location is the cell membrane. The catalysed reaction is methylamine + O2 + H2O = formaldehyde + H2O2 + NH4(+). It carries out the reaction benzylamine + O2 + H2O = benzaldehyde + H2O2 + NH4(+). It catalyses the reaction 2-phenylethylamine + O2 + H2O = 2-phenylacetaldehyde + H2O2 + NH4(+). Functionally, catalyzes the oxidative deamination of primary amines to the corresponding aldehydes with the concomitant production of hydrogen peroxide and ammonia. Has a preference for the primary monoamines methylamine and benzylamine. Could also act on 2-phenylethylamine but much less efficiently. At endothelial cells surface can also function as a cell adhesion protein that participates in lymphocyte extravasation and recirculation by mediating the binding of lymphocytes to peripheral lymph node vascular endothelial cells in an L-selectin-independent fashion. The polypeptide is Amine oxidase [copper-containing] 3 (Rattus norvegicus (Rat)).